The primary structure comprises 173 residues: ATP synthase subunit b (173 aa).

The chain crosses the membrane as a helical span at residues 18 to 38 (IFWSLVILIIVAVFFYKFFLP).

This sequence belongs to the ATPase B chain family. As to quaternary structure, F-type ATPases have 2 components, F(1) - the catalytic core - and F(0) - the membrane proton channel. F(1) has five subunits: alpha(3), beta(3), gamma(1), delta(1), epsilon(1). F(0) has three main subunits: a(1), b(2) and c(10-14). The alpha and beta chains form an alternating ring which encloses part of the gamma chain. F(1) is attached to F(0) by a central stalk formed by the gamma and epsilon chains, while a peripheral stalk is formed by the delta and b chains.

The protein localises to the cell membrane. F(1)F(0) ATP synthase produces ATP from ADP in the presence of a proton or sodium gradient. F-type ATPases consist of two structural domains, F(1) containing the extramembraneous catalytic core and F(0) containing the membrane proton channel, linked together by a central stalk and a peripheral stalk. During catalysis, ATP synthesis in the catalytic domain of F(1) is coupled via a rotary mechanism of the central stalk subunits to proton translocation. Its function is as follows. Component of the F(0) channel, it forms part of the peripheral stalk, linking F(1) to F(0). In Bifidobacterium adolescentis (strain ATCC 15703 / DSM 20083 / NCTC 11814 / E194a), this protein is ATP synthase subunit b.